A 533-amino-acid chain; its full sequence is E3 ubiquitin-protein ligase MGRN1 (533 aa).

G2 carries N-myristoyl glycine lipidation. The RING-type zinc-finger motif lies at 278-317 (ECVVCLSDLRDTLILPCRHLCLCTSCADTLRYQANNCPIC). Residues 385–388 (PSAP) carry the Required for TSG101-binding motif. Position 390 is a phosphotyrosine (Y390). The segment at 421-519 (QKGKTQSKSP…QPVPPADIYL (99 aa)) is disordered. The segment covering 423-439 (GKTQSKSPDSTLRSPSS) has biased composition (polar residues). Residues S429, S450, and S502 each carry the phosphoserine modification. Residues 443–454 (EEDEEKLSEDPE) are compositionally biased toward acidic residues.

As to quaternary structure, interacts with MC1R and MC4R. Interacts with TSG101. Interacts with mislocalized cytosolically exposed PRNP; this interaction alters MGRN1 subcellular location and causes lysosomal enlargement. In terms of processing, autoubiquitinated in vitro.

The protein localises to the cytoplasm. It is found in the cytosol. Its subcellular location is the cell membrane. The protein resides in the early endosome. The catalysed reaction is S-ubiquitinyl-[E2 ubiquitin-conjugating enzyme]-L-cysteine + [acceptor protein]-L-lysine = [E2 ubiquitin-conjugating enzyme]-L-cysteine + N(6)-ubiquitinyl-[acceptor protein]-L-lysine.. It functions in the pathway protein modification; protein ubiquitination. E3 ubiquitin-protein ligase. Mediates TSG101 monoubiquitination at multiple sites. Plays a role in the regulation of endosome-to-lysosome trafficking. Impairs MC1R- and MC4R-signaling by competing with GNAS-binding to MCRs and inhibiting agonist-induced cAMP production. Does not inhibit ADRB2-signaling. Does not promote MC1R ubiquitination. Also acts as a negative regulator of hedgehog signaling. The chain is E3 ubiquitin-protein ligase MGRN1 (Mgrn1) from Rattus norvegicus (Rat).